The following is a 241-amino-acid chain: Synaptogyrin (241 aa).

One can recognise an MARVEL domain in the interval 30 to 179 (FAMKPQVVIR…CALMAYKRFL (150 aa)). The next 4 helical transmembrane spans lie at 34 to 54 (PQVV…GCIS), 81 to 101 (MVGV…FLFE), 115 to 135 (ADMG…LYLW), and 155 to 175 (TAIW…LMAY). A disordered region spans residues 216 to 241 (ASPFGQPQQGGMEQQQSGMEYQQPTY). Positions 220 to 241 (GQPQQGGMEQQQSGMEYQQPTY) are enriched in low complexity.

This sequence belongs to the synaptogyrin family.

Its subcellular location is the cytoplasmic vesicle membrane. It localises to the cytoplasmic vesicle. The protein localises to the secretory vesicle membrane. It is found in the secretory vesicle. The protein resides in the synaptic vesicle membrane. Required for the correct formation of synaptic vesicles at nerve terminals and has a role in the regulation of the synaptic vesicle exo-endocytic cycle. This Drosophila melanogaster (Fruit fly) protein is Synaptogyrin.